The following is a 715-amino-acid chain: Photosystem I P700 chlorophyll a apoprotein A1 (715 aa).

The next 8 helical transmembrane spans lie at 60–83 (VFSAHFGQLAIIFIWLSGMYFHGA), 146–169 (LYSTAIGGLIFAALMLFAGWFHYH), 185–209 (LNHHLAGLLGLGSLSWAGHQVHVSL), 281–299 (TVHHHLAIAVLFLIAGHMY), 336–359 (WHAQLALNLAMLGSLTIIVAHHMY), 375–401 (LSLFTHHMWIGGFLVVGAAAHAAIFMV), 423–445 (AIISHLNWACIFLGFHSFGLYIH), and 521–539 (FLVHHIHAFTIHVTVLILL). The [4Fe-4S] cluster site is built by C563 and C572. The next 2 membrane-spanning stretches (helical) occupy residues 579-600 (HVFLGLFWMYNAISVVIFHFSW) and 654-676 (LSAYGLLFLGAHFVWAFSLMFLF). H665 provides a ligand contact to chlorophyll a'. Chlorophyll a contacts are provided by M673 and Y681. W682 lines the phylloquinone pocket. A helical transmembrane segment spans residues 714-715 (AE).

It belongs to the PsaA/PsaB family. As to quaternary structure, the PsaA/B heterodimer binds the P700 chlorophyll special pair and subsequent electron acceptors. PSI consists of a core antenna complex that captures photons, and an electron transfer chain that converts photonic excitation into a charge separation. The eukaryotic PSI reaction center is composed of at least 11 subunits. P700 is a chlorophyll a/chlorophyll a' dimer, A0 is one or more chlorophyll a, A1 is one or both phylloquinones and FX is a shared 4Fe-4S iron-sulfur center. is required as a cofactor.

It localises to the plastid. It is found in the chloroplast thylakoid membrane. It carries out the reaction reduced [plastocyanin] + hnu + oxidized [2Fe-2S]-[ferredoxin] = oxidized [plastocyanin] + reduced [2Fe-2S]-[ferredoxin]. Its function is as follows. PsaA and PsaB bind P700, the primary electron donor of photosystem I (PSI), as well as the electron acceptors A0, A1 and FX. PSI is a plastocyanin-ferredoxin oxidoreductase, converting photonic excitation into a charge separation, which transfers an electron from the donor P700 chlorophyll pair to the spectroscopically characterized acceptors A0, A1, FX, FA and FB in turn. Oxidized P700 is reduced on the lumenal side of the thylakoid membrane by plastocyanin. This Phlegmariurus squarrosus (Rock tassel fern) protein is Photosystem I P700 chlorophyll a apoprotein A1.